Reading from the N-terminus, the 160-residue chain is MRCPRCHHNNSRVIDSRQADDGRAIRRRRECENCSYRFTTFERIEAAPLLVIKKNGDREEFNRDKILRGLIRSAEKRPVAMEQMVQIVDNVENRVRSLGENEVSTTLIGEYVMEDLVNLDEIAYIRFASVYRQFKDMSVFLKELQDIVDKAKSSSPDSEN.

A zinc finger spans residues 3–34 (CPRCHHNNSRVIDSRQADDGRAIRRRRECENC). The ATP-cone domain occupies 49–139 (LLVIKKNGDR…VYRQFKDMSV (91 aa)).

The protein belongs to the NrdR family. The cofactor is Zn(2+).

Negatively regulates transcription of bacterial ribonucleotide reductase nrd genes and operons by binding to NrdR-boxes. The sequence is that of Transcriptional repressor NrdR from Enterococcus faecalis (strain ATCC 700802 / V583).